A 122-amino-acid chain; its full sequence is Large ribosomal subunit protein uL18 (122 aa).

The interval 1–20 is disordered; sequence MFKKVSKNANRLSRHQRVRN.

It belongs to the universal ribosomal protein uL18 family. In terms of assembly, part of the 50S ribosomal subunit; part of the 5S rRNA/L5/L18/L25 subcomplex. Contacts the 5S and 23S rRNAs.

Functionally, this is one of the proteins that bind and probably mediate the attachment of the 5S RNA into the large ribosomal subunit, where it forms part of the central protuberance. The protein is Large ribosomal subunit protein uL18 of Alkaliphilus oremlandii (strain OhILAs) (Clostridium oremlandii (strain OhILAs)).